Reading from the N-terminus, the 661-residue chain is UvrABC system protein C (661 aa).

In terms of domain architecture, GIY-YIG spans 52 to 130 (HKPGVYRMVD…IKRLHPRFNV (79 aa)). The 36-residue stretch at 240–275 (QSIKNDMVQAMHKAAKNFDFEQAAAYRDRLSALSHI) folds into the UVR domain.

Belongs to the UvrC family. As to quaternary structure, interacts with UvrB in an incision complex.

The protein localises to the cytoplasm. Functionally, the UvrABC repair system catalyzes the recognition and processing of DNA lesions. UvrC both incises the 5' and 3' sides of the lesion. The N-terminal half is responsible for the 3' incision and the C-terminal half is responsible for the 5' incision. The chain is UvrABC system protein C from Bartonella henselae (strain ATCC 49882 / DSM 28221 / CCUG 30454 / Houston 1) (Rochalimaea henselae).